Here is a 223-residue protein sequence, read N- to C-terminus: Phosphoribosylformylglycinamidine synthase subunit PurQ (223 aa).

The region spanning 4–223 (RIGVITFPGT…FQSVLSTLVS (220 aa)) is the Glutamine amidotransferase type-1 domain. Cys87 serves as the catalytic Nucleophile. Active-site residues include His195 and Glu197.

Part of the FGAM synthase complex composed of 1 PurL, 1 PurQ and 2 PurS subunits.

Its subcellular location is the cytoplasm. The enzyme catalyses N(2)-formyl-N(1)-(5-phospho-beta-D-ribosyl)glycinamide + L-glutamine + ATP + H2O = 2-formamido-N(1)-(5-O-phospho-beta-D-ribosyl)acetamidine + L-glutamate + ADP + phosphate + H(+). It catalyses the reaction L-glutamine + H2O = L-glutamate + NH4(+). The protein operates within purine metabolism; IMP biosynthesis via de novo pathway; 5-amino-1-(5-phospho-D-ribosyl)imidazole from N(2)-formyl-N(1)-(5-phospho-D-ribosyl)glycinamide: step 1/2. In terms of biological role, part of the phosphoribosylformylglycinamidine synthase complex involved in the purines biosynthetic pathway. Catalyzes the ATP-dependent conversion of formylglycinamide ribonucleotide (FGAR) and glutamine to yield formylglycinamidine ribonucleotide (FGAM) and glutamate. The FGAM synthase complex is composed of three subunits. PurQ produces an ammonia molecule by converting glutamine to glutamate. PurL transfers the ammonia molecule to FGAR to form FGAM in an ATP-dependent manner. PurS interacts with PurQ and PurL and is thought to assist in the transfer of the ammonia molecule from PurQ to PurL. The protein is Phosphoribosylformylglycinamidine synthase subunit PurQ of Corynebacterium jeikeium (strain K411).